Here is a 144-residue protein sequence, read N- to C-terminus: Na(+)/H(+) antiporter subunit B (144 aa).

Helical transmembrane passes span 9-31 (VLLHTLTRVVTFIILAFSVYLFF), 41-58 (FIGGLMTASALLLMYLGF), 75-97 (IAFGLLIAIFTGFGGLLVGDPYL), and 117-139 (ALPFDLGIYLVVIGIALTIILTI).

The protein belongs to the CPA3 antiporters (TC 2.A.63) subunit B family. In terms of assembly, forms a heterooligomeric complex that consists of seven subunits: MrpA, MrpB, MrpC, MrpD, MrpE, MrpF and MrpG.

It localises to the cell membrane. In terms of biological role, mnh complex is a Na(+)Li(+)/H(+) antiporter involved in Na(+) and/or Li(+) excretion and Na(+) resistance. Na(+)/H(+) antiport consumes a transmembrane electrical potential, and is thus inferred to be electrogenic. Does not transport K(+), Ca(2+) or Mg(2+). In Alkalihalophilus pseudofirmus (strain ATCC BAA-2126 / JCM 17055 / OF4) (Bacillus pseudofirmus), this protein is Na(+)/H(+) antiporter subunit B (mrpB).